A 370-amino-acid chain; its full sequence is tRNA-specific 2-thiouridylase MnmA (370 aa).

ATP contacts are provided by residues 19-26 (AMSGGVDS) and leucine 45. Catalysis depends on cysteine 113, which acts as the Nucleophile. Cysteine 113 and cysteine 209 form a disulfide bridge. ATP is bound at residue glycine 137. Residues 159-161 (KDQ) are interaction with tRNA. Cysteine 209 functions as the Cysteine persulfide intermediate in the catalytic mechanism.

Belongs to the MnmA/TRMU family.

It is found in the cytoplasm. The catalysed reaction is S-sulfanyl-L-cysteinyl-[protein] + uridine(34) in tRNA + AH2 + ATP = 2-thiouridine(34) in tRNA + L-cysteinyl-[protein] + A + AMP + diphosphate + H(+). Functionally, catalyzes the 2-thiolation of uridine at the wobble position (U34) of tRNA, leading to the formation of s(2)U34. This Rickettsia conorii (strain ATCC VR-613 / Malish 7) protein is tRNA-specific 2-thiouridylase MnmA.